The primary structure comprises 185 residues: UPF0200 protein TON_1344 (185 aa).

7–14 provides a ligand contact to ATP; that stretch reads GMPGSGKS.

Belongs to the UPF0200 family.

This chain is UPF0200 protein TON_1344, found in Thermococcus onnurineus (strain NA1).